Consider the following 458-residue polypeptide: ATP synthase subunit beta (458 aa).

Residue 148 to 155 coordinates ATP; the sequence is GGAGVGKT.

Belongs to the ATPase alpha/beta chains family. As to quaternary structure, F-type ATPases have 2 components, CF(1) - the catalytic core - and CF(0) - the membrane proton channel. CF(1) has five subunits: alpha(3), beta(3), gamma(1), delta(1), epsilon(1). CF(0) has three main subunits: a(1), b(2) and c(9-12). The alpha and beta chains form an alternating ring which encloses part of the gamma chain. CF(1) is attached to CF(0) by a central stalk formed by the gamma and epsilon chains, while a peripheral stalk is formed by the delta and b chains.

It is found in the cell inner membrane. The enzyme catalyses ATP + H2O + 4 H(+)(in) = ADP + phosphate + 5 H(+)(out). Functionally, produces ATP from ADP in the presence of a proton gradient across the membrane. The catalytic sites are hosted primarily by the beta subunits. This Pseudomonas entomophila (strain L48) protein is ATP synthase subunit beta.